The primary structure comprises 180 residues: Large ribosomal subunit protein uL22 (180 aa).

Disordered stretches follow at residues 1-20 (MTKP…CKSR) and 160-180 (PKPA…EISA). Positions 8–20 (KTPSNPEKSCKSR) are enriched in polar residues.

This sequence belongs to the universal ribosomal protein uL22 family.

This Dictyostelium discoideum (Social amoeba) protein is Large ribosomal subunit protein uL22 (rpl17).